The following is a 313-amino-acid chain: Ornithine carbamoyltransferase (313 aa).

Carbamoyl phosphate-binding positions include 57 to 60 (STRT), Gln84, Arg108, and 135 to 138 (HPTQ). L-ornithine is bound by residues Asn167, Asp231, and 235–236 (SM). Residues 272–273 (CL) and Arg300 contribute to the carbamoyl phosphate site.

This sequence belongs to the aspartate/ornithine carbamoyltransferase superfamily. OTCase family.

The protein localises to the cytoplasm. The catalysed reaction is carbamoyl phosphate + L-ornithine = L-citrulline + phosphate + H(+). It participates in amino-acid biosynthesis; L-arginine biosynthesis; L-arginine from L-ornithine and carbamoyl phosphate: step 1/3. Reversibly catalyzes the transfer of the carbamoyl group from carbamoyl phosphate (CP) to the N(epsilon) atom of ornithine (ORN) to produce L-citrulline. This is Ornithine carbamoyltransferase from Pseudothermotoga lettingae (strain ATCC BAA-301 / DSM 14385 / NBRC 107922 / TMO) (Thermotoga lettingae).